A 534-amino-acid polypeptide reads, in one-letter code: UDP-glucuronosyltransferase 2A3 (534 aa).

The first 18 residues, 1–18 (MVSEKCVAAFFLLQLCWA), serve as a signal peptide directing secretion. Residues 19-493 (GCGFCSKVLV…SWFQYHSLDV (475 aa)) lie on the Extracellular side of the membrane. N-linked (GlcNAc...) asparagine glycosylation is present at Asn-102. Lys-135 carries the N6-succinyllysine modification. Asn-204 carries N-linked (GlcNAc...) asparagine glycosylation. Residues 494 to 514 (IGFLLLCVVTLTFIITKFCLF) traverse the membrane as a helical segment. At 515–534 (VCQKLYMKESKKMGNRKKKN) the chain is on the cytoplasmic side.

This sequence belongs to the UDP-glycosyltransferase family. Highly expressed in liver, with lower levels in duodenum and jejunum.

The protein localises to the membrane. It catalyses the reaction glucuronate acceptor + UDP-alpha-D-glucuronate = acceptor beta-D-glucuronoside + UDP + H(+). UDP-glucuronosyltransferases catalyze phase II biotransformation reactions in which lipophilic substrates are conjugated with glucuronic acid to increase water solubility and enhance excretion. They are of major importance in the conjugation and subsequent elimination of potentially toxic xenobiotics and endogenous compounds. The chain is UDP-glucuronosyltransferase 2A3 (Ugt2a3) from Mus musculus (Mouse).